The sequence spans 255 residues: Ribonuclease HII (255 aa).

Residues 72–255 enclose the RNase H type-2 domain; the sequence is RLIAGIDEVG…RTFAPIKDMI (184 aa). A divalent metal cation is bound by residues Asp78, Glu79, and Asp170.

The protein belongs to the RNase HII family. It depends on Mn(2+) as a cofactor. The cofactor is Mg(2+).

It localises to the cytoplasm. The catalysed reaction is Endonucleolytic cleavage to 5'-phosphomonoester.. Functionally, endonuclease that specifically degrades the RNA of RNA-DNA hybrids. The sequence is that of Ribonuclease HII from Enterococcus faecalis (strain ATCC 700802 / V583).